A 228-amino-acid polypeptide reads, in one-letter code: THAP domain-containing protein 2 (228 aa).

A THAP-type zinc finger spans residues 1 to 80 (MPTNCAAAGC…LKMDAVPTIF (80 aa)). Positions 123–126 (EHSY) match the HCFC1-binding motif (HBM) motif.

This chain is THAP domain-containing protein 2 (THAP2), found in Homo sapiens (Human).